Here is a 416-residue protein sequence, read N- to C-terminus: Gamma-glutamyl phosphate reductase (416 aa).

This sequence belongs to the gamma-glutamyl phosphate reductase family.

It is found in the cytoplasm. It carries out the reaction L-glutamate 5-semialdehyde + phosphate + NADP(+) = L-glutamyl 5-phosphate + NADPH + H(+). The protein operates within amino-acid biosynthesis; L-proline biosynthesis; L-glutamate 5-semialdehyde from L-glutamate: step 2/2. Functionally, catalyzes the NADPH-dependent reduction of L-glutamate 5-phosphate into L-glutamate 5-semialdehyde and phosphate. The product spontaneously undergoes cyclization to form 1-pyrroline-5-carboxylate. This Salmonella typhi protein is Gamma-glutamyl phosphate reductase.